Consider the following 274-residue polypeptide: 2-dehydro-3-deoxyphosphooctonate aldolase (274 aa).

It belongs to the KdsA family.

It localises to the cytoplasm. The enzyme catalyses D-arabinose 5-phosphate + phosphoenolpyruvate + H2O = 3-deoxy-alpha-D-manno-2-octulosonate-8-phosphate + phosphate. Its pathway is carbohydrate biosynthesis; 3-deoxy-D-manno-octulosonate biosynthesis; 3-deoxy-D-manno-octulosonate from D-ribulose 5-phosphate: step 2/3. The protein operates within bacterial outer membrane biogenesis; lipopolysaccharide biosynthesis. This chain is 2-dehydro-3-deoxyphosphooctonate aldolase, found in Rickettsia typhi (strain ATCC VR-144 / Wilmington).